Here is a 187-residue protein sequence, read N- to C-terminus: Resolvase OPG149 (187 aa).

It belongs to the RuvC family. Poxviruses-type subfamily. It depends on Mg(2+) as a cofactor.

Its function is as follows. Plays a role in DNA replication by cleaving viral DNA concatamers to yield unit-length viral genomes. The concatamer junctions contain inverted repeat sequences that can be extruded as cruciforms, yielding Holliday junctions that A22 protein cleaves. The polypeptide is Resolvase OPG149 (OPG149) (Variola virus (isolate Human/India/Ind3/1967) (VARV)).